Reading from the N-terminus, the 391-residue chain is Mannose-6-phosphate isomerase (391 aa).

The Zn(2+) site is built by Q97, H99, E134, and H255. Residue R274 is part of the active site.

This sequence belongs to the mannose-6-phosphate isomerase type 1 family. Zn(2+) serves as cofactor.

The protein resides in the cytoplasm. It carries out the reaction D-mannose 6-phosphate = D-fructose 6-phosphate. Involved in the conversion of glucose to GDP-L-fucose, which can be converted to L-fucose, a capsular polysaccharide. This chain is Mannose-6-phosphate isomerase (manA), found in Salmonella typhimurium (strain LT2 / SGSC1412 / ATCC 700720).